The sequence spans 528 residues: Calcium-dependent protein kinase 13 (528 aa).

Gly2 carries N-myristoyl glycine lipidation. Residues 17–32 (KSNYSGHDHARKDAAG) show a composition bias toward basic and acidic residues. The interval 17–37 (KSNYSGHDHARKDAAGGKKSA) is disordered. The residue at position 43 (Ser43) is a Phosphoserine. The region spanning 54–312 (YLLDRELGRG…AKQVLEHPWI (259 aa)) is the Protein kinase domain. ATP is bound by residues 60–68 (LGRGEFGVT) and Lys83. The Proton acceptor role is filled by Asp178. At Ser218 the chain carries Phosphoserine. The segment at 318–348 (APNVPLGDVVKSRLKQFSVMNRFKRKALRVI) is autoinhibitory domain. 4 EF-hand domains span residues 355–390 (EEVEDIKVMFNKMDTDNDGIVSIEELKAGLRDFSTQ), 391–426 (LAESEVQMLIEAVDTKGKGTLDYGEFVAVSLHLQKV), 427–462 (ANDEHLRKAFSYFDKDGNGYILPQELCDALKEDGGD), and 463–498 (DCVDVANDIFQEVDTDKDGRISYEEFAAMMKTGTDW). Ca(2+)-binding residues include Asp368, Asp370, Asp372, Glu379, Asp404, Thr410, Glu415, Asp440, Asp442, Asn444, Tyr446, Glu451, Asp476, Asp478, Asp480, and Arg482. The residue at position 484 (Ser484) is a Phosphoserine. Residue Glu487 coordinates Ca(2+). A Phosphoserine modification is found at Ser522.

Belongs to the protein kinase superfamily. Ser/Thr protein kinase family. CDPK subfamily.

The protein resides in the cell membrane. The enzyme catalyses L-seryl-[protein] + ATP = O-phospho-L-seryl-[protein] + ADP + H(+). It catalyses the reaction L-threonyl-[protein] + ATP = O-phospho-L-threonyl-[protein] + ADP + H(+). Activated by calcium. Autophosphorylation may play an important role in the regulation of the kinase activity. Its function is as follows. May play a role in signal transduction pathways that involve calcium as a second messenger. This is Calcium-dependent protein kinase 13 (CPK13) from Arabidopsis thaliana (Mouse-ear cress).